We begin with the raw amino-acid sequence, 124 residues long: U13-hexatoxin-Mg1a (124 aa).

Positions 1–17 are cleaved as a signal peptide; the sequence is MKLSALVFVASVMLVAA. The propeptide occupies 18-52; that stretch reads SPVKDVEEPVETHLAADLKTIEELAKYEEAAVQKR. 4 disulfides stabilise this stretch: cysteine 54-cysteine 72, cysteine 65-cysteine 78, cysteine 69-cysteine 116, and cysteine 71-cysteine 87.

In terms of tissue distribution, expressed by the venom gland.

Its subcellular location is the secreted. Functionally, no toxicity is observed upon intracranial injection into mice and intrathorax injection into crickets. The polypeptide is U13-hexatoxin-Mg1a (Macrothele gigas (Japanese funnel web spider)).